An 87-amino-acid polypeptide reads, in one-letter code: U3-theraphotoxin-Cg1c (87 aa).

The signal sequence occupies residues 1-23 (MRTFTLIAILTCAVLVIFHVSAA). Residues 24-51 (EELEAQDVIQPEDIFTGVATLEEDRIFE) constitute a propeptide that is removed on maturation. Disulfide bonds link Cys-52-Cys-65, Cys-56-Cys-79, and Cys-73-Cys-84.

It belongs to the neurotoxin 12 (Hwtx-2) family. 03 (juruin) subfamily. Expressed by the venom gland.

The protein resides in the secreted. Functionally, probable ion channel inhibitor. The protein is U3-theraphotoxin-Cg1c of Chilobrachys guangxiensis (Chinese earth tiger tarantula).